Here is an 892-residue protein sequence, read N- to C-terminus: Alanine--tRNA ligase (892 aa).

4 residues coordinate Zn(2+): histidine 578, histidine 582, cysteine 681, and histidine 685.

This sequence belongs to the class-II aminoacyl-tRNA synthetase family. Requires Zn(2+) as cofactor.

The protein resides in the cytoplasm. It carries out the reaction tRNA(Ala) + L-alanine + ATP = L-alanyl-tRNA(Ala) + AMP + diphosphate. Its function is as follows. Catalyzes the attachment of alanine to tRNA(Ala) in a two-step reaction: alanine is first activated by ATP to form Ala-AMP and then transferred to the acceptor end of tRNA(Ala). Also edits incorrectly charged Ser-tRNA(Ala) and Gly-tRNA(Ala) via its editing domain. In Cutibacterium acnes (strain DSM 16379 / KPA171202) (Propionibacterium acnes), this protein is Alanine--tRNA ligase.